Reading from the N-terminus, the 171-residue chain is Interleukin-26 (171 aa).

Positions 1–21 are cleaved as a signal peptide; it reads MLVNFILRCGLLLVTLSLAIA.

Belongs to the IL-10 family. Homodimer. As to expression, expressed in HVS transformed T-cells but not other T-cell lines or primary stimulated T-cells. Expressed in colonic T-cells including Th17 inflammatory T-cells; the expression is significantly increased in serum of patients with Crohn's disease (at protein level).

It is found in the secreted. Its function is as follows. May play a role in local mechanisms of mucosal immunity and seems to have a pro-inflammatory function. May play a role in inflammatory bowel disease. Activates STAT1 and STAT3, MAPK1/3 (ERK1/2), JUN and AKT. Induces expression of SOCS3, TNF-alpha and IL-8, secretion of IL-8 and IL-10 and surface expression of ICAM1. Decreases proliferation of intestinal epithelial cells. Is inhibited by heparin. The chain is Interleukin-26 (IL26) from Homo sapiens (Human).